Consider the following 217-residue polypeptide: ATP-dependent Clp protease proteolytic subunit 2 (217 aa).

Ser-121 acts as the Nucleophile in catalysis. The active site involves His-146.

The protein belongs to the peptidase S14 family. As to quaternary structure, fourteen ClpP subunits assemble into 2 heptameric rings which stack back to back to give a disk-like structure with a central cavity, resembling the structure of eukaryotic proteasomes.

It localises to the cytoplasm. The enzyme catalyses Hydrolysis of proteins to small peptides in the presence of ATP and magnesium. alpha-casein is the usual test substrate. In the absence of ATP, only oligopeptides shorter than five residues are hydrolyzed (such as succinyl-Leu-Tyr-|-NHMec, and Leu-Tyr-Leu-|-Tyr-Trp, in which cleavage of the -Tyr-|-Leu- and -Tyr-|-Trp bonds also occurs).. Its function is as follows. Cleaves peptides in various proteins in a process that requires ATP hydrolysis. Has a chymotrypsin-like activity. Plays a major role in the degradation of misfolded proteins. The sequence is that of ATP-dependent Clp protease proteolytic subunit 2 from Paraburkholderia xenovorans (strain LB400).